Reading from the N-terminus, the 80-residue chain is Putative membrane protein insertion efficiency factor (80 aa).

The protein belongs to the UPF0161 family.

It localises to the cell membrane. Functionally, could be involved in insertion of integral membrane proteins into the membrane. This Corynebacterium jeikeium (strain K411) protein is Putative membrane protein insertion efficiency factor.